A 62-amino-acid chain; its full sequence is DNA-binding protein 7 (62 aa).

Belongs to the 7 kDa DNA-binding/endoribonuclease P2 family. In terms of assembly, monomer.

The protein localises to the cytoplasm. Its function is as follows. Can constrain negative DNA supercoils. May be involved in maintaining the integrity of the genome at high temperature. This Metallosphaera sedula (strain ATCC 51363 / DSM 5348 / JCM 9185 / NBRC 15509 / TH2) protein is DNA-binding protein 7.